The sequence spans 1761 residues: Nonribosomal peptide synthetase 6 (1761 aa).

The tract at residues 63-468 (ERAALHPEKI…GRQDQQVKLR (406 aa)) is adenylation. Residues 600–675 (EATTEMELKL…AMAEKAKPVS (76 aa)) form the Carrier 1 domain. The residue at position 636 (S636) is an O-(pantetheine 4'-phosphoryl)serine. Residues 712–1135 (VEDVYPCTPL…AVLDPAEARD (424 aa)) are condensation 1. Carrier domains are found at residues 1169 to 1242 (SPNE…SNER) and 1237 to 1313 (SASN…EEEM). 2 positions are modified to O-(pantetheine 4'-phosphoryl)serine: S1203 and S1274. The interval 1354–1677 (IYPTRPLQQL…DKVQWFDTVV (324 aa)) is condensation 2.

Belongs to the NRP synthetase family.

Its pathway is siderophore biosynthesis. Its function is as follows. NRPS involved in extracellular coprogen-type siderophores biosynthesis including coprogen, neocoprogen I and neocoprogen II. The role of extracellular siderophores in fungal virulence to plants is to supply iron to the fungus during plant infection, but not to act as phytotoxins, depriving their hosts of iron. The chain is Nonribosomal peptide synthetase 6 from Cochliobolus miyabeanus (Brown spot disease fungus).